The sequence spans 513 residues: Bifunctional pantoate ligase/cytidylate kinase (513 aa).

The tract at residues 1-282 is pantoate--beta-alanine ligase; the sequence is MGTFHRLTTT…VGQTRLIDNC (282 aa). ATP is bound at residue 32–39; the sequence is MGALHGGH. Histidine 39 serves as the catalytic Proton donor. Position 63 (glutamine 63) interacts with (R)-pantoate. Beta-alanine is bound at residue glutamine 63. Residue 152–155 coordinates ATP; sequence GQKD. Position 158 (glutamine 158) interacts with (R)-pantoate. ATP contacts are provided by residues valine 181 and 189–192; that span reads LSSR. Residues 283–513 form a cytidylate kinase region; it reads LLDRRRPILA…HLYRSRFPQP (231 aa).

The protein in the N-terminal section; belongs to the pantothenate synthetase family. It in the C-terminal section; belongs to the cytidylate kinase family. Type 1 subfamily.

It is found in the cytoplasm. The enzyme catalyses (R)-pantoate + beta-alanine + ATP = (R)-pantothenate + AMP + diphosphate + H(+). The catalysed reaction is CMP + ATP = CDP + ADP. It catalyses the reaction dCMP + ATP = dCDP + ADP. Its pathway is cofactor biosynthesis; (R)-pantothenate biosynthesis; (R)-pantothenate from (R)-pantoate and beta-alanine: step 1/1. Its function is as follows. Catalyzes the condensation of pantoate with beta-alanine in an ATP-dependent reaction via a pantoyl-adenylate intermediate. In terms of biological role, catalyzes the transfer of a phosphate group from ATP to either CMP or dCMP to form CDP or dCDP and ADP, respectively. This is Bifunctional pantoate ligase/cytidylate kinase from Thermosynechococcus vestitus (strain NIES-2133 / IAM M-273 / BP-1).